A 435-amino-acid chain; its full sequence is Uracil permease (435 aa).

The next 12 helical transmembrane spans lie at 17–37, 42–62, 67–87, 91–111, 122–142, 161–181, 191–213, 234–254, 311–331, 336–356, 376–396, and 399–419; these read FSWVSFSLQHLFAMFGSTILV, GMSPAVALVTSGIGTLAYLLI, IPAYLGSSFAFISPIILVKAT, GAAMVGAFLAGLVYGLIALLI, ILPPVVVGPVIIVIGLGLAST, LKHFSVAGVTLAITIICAIFL, LIGIIGGYLFALTQGIVNFQPVL, VTLGIAAAMVPVAFVTMSEHI, VFSVFVIGGAAVIALCFGFIG, LISSVPSAVMGGVSFLLFGII, NLIITSVILVIGVGGAFIQVS, and GFQVSGMALAAIVGVILNLIL.

It belongs to the nucleobase:cation symporter-2 (NCS2) (TC 2.A.40) family.

It is found in the cell membrane. Transport of uracil in the cell. This Bacillus subtilis (strain 168) protein is Uracil permease (pyrP).